The sequence spans 42 residues: Iota-conotoxin-like R11.16 (42 aa).

Intrachain disulfides connect Cys5/Cys19, Cys12/Cys22, Cys18/Cys27, and Cys21/Cys36.

The protein belongs to the conotoxin I1 superfamily. Expressed by the venom duct.

It localises to the secreted. Functionally, iota-conotoxins bind to voltage-gated sodium channels (Nav) and act as agonists by shifting the voltage-dependence of activation to more hyperpolarized levels. Produces general excitatory symptoms. The chain is Iota-conotoxin-like R11.16 from Conus radiatus (Rayed cone).